Consider the following 242-residue polypeptide: Probable transcriptional regulatory protein BURPS1710b_1385 (242 aa).

It belongs to the TACO1 family.

It is found in the cytoplasm. The protein is Probable transcriptional regulatory protein BURPS1710b_1385 of Burkholderia pseudomallei (strain 1710b).